The chain runs to 78 residues: Small ribosomal subunit protein bS16c (78 aa).

It belongs to the bacterial ribosomal protein bS16 family.

The protein resides in the plastid. It is found in the chloroplast. This is Small ribosomal subunit protein bS16c from Phaeodactylum tricornutum (strain CCAP 1055/1).